Consider the following 297-residue polypeptide: Bifunctional protein FolD (297 aa).

Residues 166-168, serine 191, and isoleucine 232 contribute to the NADP(+) site; that span reads GRS.

This sequence belongs to the tetrahydrofolate dehydrogenase/cyclohydrolase family. In terms of assembly, homodimer.

The enzyme catalyses (6R)-5,10-methylene-5,6,7,8-tetrahydrofolate + NADP(+) = (6R)-5,10-methenyltetrahydrofolate + NADPH. It catalyses the reaction (6R)-5,10-methenyltetrahydrofolate + H2O = (6R)-10-formyltetrahydrofolate + H(+). The protein operates within one-carbon metabolism; tetrahydrofolate interconversion. Catalyzes the oxidation of 5,10-methylenetetrahydrofolate to 5,10-methenyltetrahydrofolate and then the hydrolysis of 5,10-methenyltetrahydrofolate to 10-formyltetrahydrofolate. The chain is Bifunctional protein FolD from Phenylobacterium zucineum (strain HLK1).